The following is a 734-amino-acid chain: ABC transporter D family member 1 (734 aa).

4 helical membrane-spanning segments follow: residues 52–72 (IIKI…ILFG), 112–132 (FAIG…SIMA), 177–197 (FTTL…VVVY), and 204–224 (TTID…GYLI). Residues 63–351 (PLTLFLILFG…VEEEQAKIQF (289 aa)) form the ABC transmembrane type-1 domain. A compositionally biased stretch (basic and acidic residues) spans 271–286 (HPEKRFDNNDYDHGYE). The segment at 271–296 (HPEKRFDNNDYDHGYESDDSDQSCDE) is disordered. Residues 332-359 (DSNDQKEELLVEEEQAKIQFEALLKNKK) adopt a coiled-coil conformation. The chain crosses the membrane as a helical span at residues 374–394 (LFTYLSPIANYFIIAIPVFFL). Residues 492-729 (ITLDDVTYFT…NNNNTNKIAE (238 aa)) form the ABC transporter domain. Residue 525–532 (GPSGSGKS) coordinates ATP. The span at 712–725 (QSNNINNNNNNNTN) shows a compositional bias: low complexity. A disordered region spans residues 712 to 734 (QSNNINNNNNNNTNKIAEDSVFD).

It belongs to the ABC transporter superfamily. ABCD family. Peroxisomal fatty acyl CoA transporter (TC 3.A.1.203) subfamily.

Its subcellular location is the membrane. The catalysed reaction is (9Z)-octadecenoyl-CoA(in) = (9Z)-octadecenoyl-CoA(out). The polypeptide is ABC transporter D family member 1 (abcD1) (Dictyostelium discoideum (Social amoeba)).